The following is a 69-amino-acid chain: Putative membrane protein insertion efficiency factor (69 aa).

It belongs to the UPF0161 family.

It is found in the cell membrane. Functionally, could be involved in insertion of integral membrane proteins into the membrane. In Thermoanaerobacter pseudethanolicus (strain ATCC 33223 / 39E) (Clostridium thermohydrosulfuricum), this protein is Putative membrane protein insertion efficiency factor.